The following is a 531-amino-acid chain: MELRSELPSVPGAATAAATATGPPVASVASVAAAAAAAASLPVSVAGGLLRAPPLLLRAAEKYPRTPKCARCRNHGVVSALKGHKRYCRWKDCLCAKCTLIAERQRVMAAQVALRRQQAQEENEARELQLLYGTAEGLALAAANGIIPPRPAYEVFGSVCATDGGGPGAGAPAGSAGGAGGAEAKLQKFDLFPKTLLQAGRPDSPQPPPGKPLSPDGADSGPRTSSPEVRPGSGSENGDGESFSGSPLARASKEAGGSCPGSAGAGGGGEEDSPGSSSPLGSESGSEADKEEAEAAPTPGLGGGPGPRQRTPLDILTRVFPGHRRGVLELVLQGCGGDVVQAIEQVLNHHRGGLAAGLGPAAPLEKAAVSAAVEDAWPGRVEAAAAGGAGLPAPLQTGPTAPPHHRPLLAGAMTPGALGSLSSRSAFSPLQPNASHFGADAGAYPLGAPLGLSPLRLAYSAAAAHSRGLAFMAPYSTAGLVPTLGFRPPMDYAFSDLMRDRSAAAAAAVHKEPGYGGGLYGPMVNGTPEKQ.

The segment at residues 69–116 is a DNA-binding region (DM); it reads CARCRNHGVVSALKGHKRYCRWKDCLCAKCTLIAERQRVMAAQVALRR. The tract at residues 197-312 is disordered; sequence LQAGRPDSPQ…GGPGPRQRTP (116 aa). Over residues 274–285 the composition is skewed to low complexity; that stretch reads PGSSSPLGSESG. One can recognise a DMA domain in the interval 310 to 345; that stretch reads RTPLDILTRVFPGHRRGVLELVLQGCGGDVVQAIEQ.

Belongs to the DMRT family. As to expression, expressed in adult brain and testis, as well as in embryonic ovary, kidney, heart, lung, stomach and brain.

Its subcellular location is the nucleus. In terms of biological role, may be involved in sexual development. In Mus musculus (Mouse), this protein is Doublesex- and mab-3-related transcription factor A2 (Dmrta2).